The following is an 89-amino-acid chain: UPF0473 protein Helmi_02360 (89 aa).

Belongs to the UPF0473 family.

In Heliobacterium modesticaldum (strain ATCC 51547 / Ice1), this protein is UPF0473 protein Helmi_02360.